The sequence spans 238 residues: Major prion protein (238 aa).

Residues Met1–Cys15 form the signal peptide. The interaction with GRB2, ERI3 and SYN1 stretch occupies residues Lys16–Ser215. Residues Arg18–Ser93 are disordered. 4 tandem repeats follow at residues Pro44–Gln52, Pro53–Gln60, Pro61–Gln68, and Pro69–Gln76. The 4 X 8 AA tandem repeats of P-H-G-G-G-W-G-Q stretch occupies residues Pro44–Gln83. Residues Gln45 to Thr80 are compositionally biased toward gly residues. Cu(2+) is bound by residues Gly47, Gly48, His54, Gly55, Gly56, His62, Gly63, Gly64, His70, Gly71, and Gly72. A compositionally biased stretch (basic residues) spans Gln83–Ser93. A disulfide bridge links Cys164 with Cys199. Asn166 and Asn182 each carry an N-linked (GlcNAc...) asparagine glycan. Ser215 carries GPI-anchor amidated serine lipidation. Residues Ser216 to Gly238 constitute a propeptide, removed in mature form.

The protein belongs to the prion family. As to quaternary structure, monomer and homodimer. Has a tendency to aggregate into amyloid fibrils containing a cross-beta spine, formed by a steric zipper of superposed beta-strands. Soluble oligomers may represent an intermediate stage on the path to fibril formation. Copper binding may promote oligomerization. Interacts with GRB2, APP, ERI3/PRNPIP and SYN1. Mislocalized cytosolically exposed PrP interacts with MGRN1; this interaction alters MGRN1 subcellular location and causes lysosomal enlargement. Interacts with KIAA1191.

It localises to the cell membrane. The protein localises to the golgi apparatus. Functionally, its primary physiological function is unclear. Has cytoprotective activity against internal or environmental stresses. May play a role in neuronal development and synaptic plasticity. May be required for neuronal myelin sheath maintenance. May play a role in iron uptake and iron homeostasis. Soluble oligomers are toxic to cultured neuroblastoma cells and induce apoptosis (in vitro). Association with GPC1 (via its heparan sulfate chains) targets PRNP to lipid rafts. Also provides Cu(2+) or Zn(2+) for the ascorbate-mediated GPC1 deaminase degradation of its heparan sulfate side chains. This is Major prion protein (PRNP) from Theropithecus gelada (Gelada baboon).